We begin with the raw amino-acid sequence, 452 residues long: MSLMQFSGLLVVWLLSTLFIATLTWFEFRRVRFNFNVFFSLLFLLTFFFGFPLTSVLVFRFDVGVAPPEILLQALLSAACFYGVYYVTYKTRLRKRVVDVPRKPLFTMNRVETHLTWVILMGIALVSVAIFFMHNGFLLFRLHSYSQIFSSEVSGVALKRFFYFFIPAMLVVYFLRQDSKAWLFFLVSTVAFGLLTYMIVGGTRANIIIAFAIFLFIGIIRGWISLWMLVAAGVLGIVGMFWLALKRYGLNVSGDEAFYTFLYLTRDTFSPWENLALLLQNYHNIDFQGLAPIVRDFYVFIPTWLWPGRPSIVLNSANYFTWEVLNNHSGLAISPTLIGSLVVMGGALFIPLGAIVVGLIIKWFDWLYELGNREPNRYKAAILHSFCFGAIFNMIVLAREGLDSFVSRVVFFLVVFGASLLVAKLLFWLFDSAGLIHKRTTSLPQAQVEGKL.

11 helical membrane-spanning segments follow: residues Phe6–Phe26, Val37–Leu57, Val63–Gly83, Val118–Leu138, Gly155–Leu175, Ala181–Gly201, Ile207–Trp227, Met228–Tyr248, Leu341–Ile361, Tyr378–Ala398, and Val410–Phe430.

The protein belongs to the WzyE family. In terms of assembly, probably part of a complex composed of WzxE, WzyE and WzzE.

It localises to the cell inner membrane. The protein operates within bacterial outer membrane biogenesis; enterobacterial common antigen biosynthesis. In terms of biological role, probably involved in the polymerization of enterobacterial common antigen (ECA) trisaccharide repeat units. The sequence is that of Probable ECA polymerase from Salmonella agona (strain SL483).